The sequence spans 79 residues: MGNIYTKDIKRIVKEIYNQYKDEIKDDYNTNKQIVVRYVDVKSKKVRNRIAGYLTRYYKIMKEKETSPTEEKEEISEEI.

The protein belongs to the eukaryotic ribosomal protein eS17 family.

The protein is Small ribosomal subunit protein eS17 of Saccharolobus islandicus (strain Y.N.15.51 / Yellowstone #2) (Sulfolobus islandicus).